The chain runs to 231 residues: LexA repressor (231 aa).

The disordered stretch occupies residues 1-24; it reads MTDRKEHKMKPGRRPTEGMTPSQE. The H-T-H motif DNA-binding region spans 43–62; the sequence is VKEIAEALGMKTPSAHEQVQ. Catalysis depends on for autocatalytic cleavage activity residues Ser-146 and Lys-183.

Belongs to the peptidase S24 family. Homodimer.

It catalyses the reaction Hydrolysis of Ala-|-Gly bond in repressor LexA.. Functionally, represses a number of genes involved in the response to DNA damage (SOS response), including recA and lexA. In the presence of single-stranded DNA, RecA interacts with LexA causing an autocatalytic cleavage which disrupts the DNA-binding part of LexA, leading to derepression of the SOS regulon and eventually DNA repair. The sequence is that of LexA repressor from Magnetococcus marinus (strain ATCC BAA-1437 / JCM 17883 / MC-1).